The following is a 279-amino-acid chain: Putative polysaccharide deacetylase YxkH (279 aa).

An N-terminal signal peptide occupies residues 1–19 (MKRLFLSIFLLGSCLALAA). The N-palmitoyl cysteine moiety is linked to residue C20. Residue C20 is the site of S-diacylglycerol cysteine attachment. The disordered stretch occupies residues 29 to 51 (QPMPKAEQKKPEKKAVQVQKKED). Residues 34 to 51 (AEQKKPEKKAVQVQKKED) are compositionally biased toward basic and acidic residues. The region spanning 119-279 (KCVLITFDDG…AFGAYIESMK (161 aa)) is the NodB homology domain.

This sequence belongs to the polysaccharide deacetylase family.

The protein localises to the cell membrane. The polypeptide is Putative polysaccharide deacetylase YxkH (yxkH) (Bacillus subtilis (strain 168)).